Reading from the N-terminus, the 122-residue chain is MVFVNSRHQGNHYEQMAADYLRRQGLTLVTQNVNYRFGELDLIMRDGNTLVFVEVRYRNNTQHGHAAETVTRTKRARLIKAANCWMLANKMNSHSADFRFDVIAIHQQGQHIDWLKNAITEG.

Belongs to the UPF0102 family.

The chain is UPF0102 protein VCM66_0538 from Vibrio cholerae serotype O1 (strain M66-2).